The primary structure comprises 1088 residues: MQTTDLGNKESGKIWHRKPNPSTNEGIIVNIVHVDASHPSKSARFLHAGFDSAGDSFIAGDHLGNVYLFNLNRNRFDLVQKTMQACTAIAFNLHRRTEFLVALADNSVKCFDTGAKELVSWMRGHESAVTSISVHPSGRYAVTTSSDTAQLWDLDTFQRKRKLNVRQSVGIQKVFFLPLSNTILSCFKDDSIFAWESDTLACKYQLPIPEDGTKLRYKAFAITRDGRMLAAGGKSNNLHLWCLDSKQLFRIIQMPTKVRSVQQLEFLPENFDGGSSQILGVLSQDGIMRFINIQTCKLVFDIGSHDNGIVTSSVSPNGRYITSVMENGSLNIYSVQALSKELNKPPPPLVKMVDLSKDKDSTGNKSGVSGASQEKVRVSSGRTCRPWKSKDQIVRTKYLRPEDTTTSEDKENTLPAGLSKQRLQALLKGFGEYPAKYRMFIWRSLLQLPENHAAFSSLLDKGTHTQYKLLHQEYPIKSRKLLRVLQRTLSALAHWSAIFGETKYLPLLAFPFVKLFQNNQLICFEVVATVITNWCQHWFEYFPNPPINILGMVENLLAHHDKELLQHFINYGVTSQVYAWPLLETLFSEVLTREEWLRLFDNVFSNHPSFLLMAVVSYIISSRSPLLHCNQKDDFEYFFHHRNNLDIGNMIREAYHLMDTSPAEIHPRRLLSDFEPLTRGQYPIFNKYPKFIVDYQGQERERIRQEEIEYLRERQLTHKVEAEAVKRRLEDEAWYQQQELLKGAEEQRRKLLMDEEQKLLHQRQRLATVKRELRLKELQLLDAARRRFLRYQQDQRKMELRRLDDELERKMSLRERETATIAKDVEIRQMELEAQRRFFEQQLAKEQEAVTQEVKGEMDANRRRADLEEQMFWRLMETEEDLKDKKLLEESLAKAERLCVETDWKIQTLQKQKCDDQERGKRYVEVSKMTDDVREKERELCDVLKAMETRKWAEVSEKMTQLETEELASSALRAKRNQFLQERLRQEAEPVNISEDGNEYFERLRDLSRNSTQNDFSSSAERHVAENVCLNDVSASDSSTHFSLDRGRGELENRERALISEVRELRQKLATQARRKYPQLHFSETNWT.

The segment at 1–20 is disordered; sequence MQTTDLGNKESGKIWHRKPN. 7 WD repeats span residues 33–74, 75–116, 117–157, 158–200, 201–248, 249–296, and 297–334; these read HVDA…LNRN, RFDL…TGAK, ELVS…LDTF, QRKR…SDTL, ACKY…SKQL, FRII…IQTC, and KLVF…NIYS. Residues 356–381 are disordered; it reads SKDKDSTGNKSGVSGASQEKVRVSSG. A compositionally biased stretch (polar residues) spans 363–372; sequence GNKSGVSGAS. Residues 432–607 form the Rab-GAP TBC domain; that stretch reads EYPAKYRMFI…RLFDNVFSNH (176 aa). 2 coiled-coil regions span residues 736-903 and 1048-1076; these read QQQE…VETD and RGEL…ARRK.

Its subcellular location is the cytoplasm. The protein resides in the cytoskeleton. It is found in the microtubule organizing center. It localises to the centrosome. The protein localises to the centriolar satellite. Its subcellular location is the cilium basal body. Molecular adapter which is involved in cilium biogenesis. Part of a functional complex including OFD1 a centriolar protein involved in cilium assembly. Could regulate the cAMP-dependent phosphorylation of OFD1, and its subsequent ubiquitination by PJA2 which ultimately leads to its proteasomal degradation. The protein is TBC1 domain family member 31 of Xenopus tropicalis (Western clawed frog).